A 168-amino-acid chain; its full sequence is Gastrula zinc finger protein XlCGF7.1 (168 aa).

6 C2H2-type zinc fingers span residues 6 to 28 (FTCT…QRTH), 34 to 56 (FTCT…LKCH), 62 to 84 (FMCT…RKIH), 90 to 112 (YICT…QTVH), 118 to 140 (FTCS…QKIH), and 146 to 168 (FKCN…ERIH).

It belongs to the krueppel C2H2-type zinc-finger protein family.

The protein resides in the nucleus. In terms of biological role, may be involved in transcriptional regulation. The chain is Gastrula zinc finger protein XlCGF7.1 from Xenopus laevis (African clawed frog).